Consider the following 365-residue polypeptide: P43 5S RNA-binding protein (365 aa).

9 C2H2-type zinc fingers span residues 15 to 39, 45 to 69, 75 to 100, 106 to 130, 136 to 160, 163 to 187, 191 to 213, 220 to 245, and 251 to 275; these read FRCP…MAGH, WKCG…MKRH, HSCP…LYKH, LKCS…VSEH, SVCD…HRRH, YRCS…LKKH, LQCA…KATH, LPCP…RKVH, and HRCP…LVVH.

In terms of assembly, the 42S RNP particle comprises four subunits each of which contains one molecule of 5S RNA, three molecules of tRNA, two molecules of p50 (EF1-alpha) and one molecule of the 5S RNA binding protein 43.

Its function is as follows. p43 is a 5S RNA binding protein which is a major constituent of oocytes and comprises part of a 42S ribonucleoprotein storage particle. This is P43 5S RNA-binding protein from Xenopus borealis (Kenyan clawed frog).